The primary structure comprises 181 residues: Cytochrome b6-f complex iron-sulfur subunit (181 aa).

The disordered stretch occupies residues 1–35 (MAQTGNFKSPARMSSLGQGAAPASAGAVTGGKPRE). Transmembrane regions (helical) follow at residues 53–73 (VGGV…RYIV) and 114–134 (GGSL…VHWD). Positions 85-178 (LAVGPASDVP…VKIEDGKIVV (94 aa)) constitute a Rieske domain. Residues Cys124, His126, Cys142, and His145 each contribute to the [2Fe-2S] cluster site. An intrachain disulfide couples Cys129 to Cys144.

It belongs to the Rieske iron-sulfur protein family. [2Fe-2S] cluster is required as a cofactor.

The protein localises to the cell inner membrane. The catalysed reaction is 2 oxidized [plastocyanin] + a plastoquinol + 2 H(+)(in) = 2 reduced [plastocyanin] + a plastoquinone + 4 H(+)(out). Functionally, component of the green S-bacteria bc-complex which consists of the Rieske protein and cytochrome b subunit and which appears to lack a cytochrome c1-equivalent. This complex has a comparatively low redox potential. This Chlorobaculum tepidum (strain ATCC 49652 / DSM 12025 / NBRC 103806 / TLS) (Chlorobium tepidum) protein is Cytochrome b6-f complex iron-sulfur subunit (petC).